The primary structure comprises 68 residues: uncharacterized protein (68 aa).

This is an uncharacterized protein from Escherichia coli (Bacteriophage T4).